The sequence spans 140 residues: Nucleoside diphosphate kinase (140 aa).

6 residues coordinate ATP: Lys11, Phe59, Arg87, Thr93, Arg104, and Asn114. His117 functions as the Pros-phosphohistidine intermediate in the catalytic mechanism.

Belongs to the NDK family. In terms of assembly, homotetramer. It depends on Mg(2+) as a cofactor.

The protein resides in the cytoplasm. The enzyme catalyses a 2'-deoxyribonucleoside 5'-diphosphate + ATP = a 2'-deoxyribonucleoside 5'-triphosphate + ADP. It catalyses the reaction a ribonucleoside 5'-diphosphate + ATP = a ribonucleoside 5'-triphosphate + ADP. Its function is as follows. Major role in the synthesis of nucleoside triphosphates other than ATP. The ATP gamma phosphate is transferred to the NDP beta phosphate via a ping-pong mechanism, using a phosphorylated active-site intermediate. This is Nucleoside diphosphate kinase from Rhodopseudomonas palustris (strain BisB18).